We begin with the raw amino-acid sequence, 1332 residues long: SAGA complex subunit SPT7 (1332 aa).

Position 78 is a phosphothreonine; by ATM or ATR (Thr-78). Disordered stretches follow at residues 80-118 (EEEHHGAVSPAVDTRSDDVSSQTIKDNNNTNTNTSISNE), 209-268 (VEEK…ISSS), and 331-384 (IEKG…PKQS). Ser-88 carries the phosphoserine modification. A compositionally biased stretch (low complexity) spans 106 to 118 (NNNTNTNTSISNE). The span at 217-233 (IGKNEKPQNKEGISKFA) shows a compositional bias: basic and acidic residues. Over residues 234–249 (EDEDYDDEDENYDEDS) the composition is skewed to acidic residues. Residues 250–260 (TDVKNVDDPPK) show a composition bias toward basic and acidic residues. Residues 345-360 (AATDEQDRENTNDEPD) show a composition bias toward acidic residues. Polar residues predominate over residues 362 to 376 (NQKLPTPEGSTFSDT). A Bromo domain is found at 440-546 (IGQEELYEAC…KKSLQLIRMI (107 aa)). The span at 566-578 (KDKDYELDEEEEV) shows a compositional bias: acidic residues. Disordered stretches follow at residues 566 to 724 (KDKD…YLLE) and 1286 to 1332 (GAEN…RLNQ). Composition is skewed to basic and acidic residues over residues 593-634 (LAKE…KDKT) and 644-697 (NVNK…KEAG). Residues 698–716 (ENNEEEEDDDDEDEDEDMV) are compositionally biased toward acidic residues. Ser-1293 is subject to Phosphoserine. Residues 1316–1332 (NMGSNSSFSLSLPRLNQ) show a composition bias toward polar residues.

As to quaternary structure, component of the 1.8 MDa SAGA (Spt-Ada-Gcn5 acetyltransferase) complex, which is composed of 19 subunits TRA1, SPT7, TAF5, NGG1/ADA3, SGF73, SPT20/ADA5, SPT8, TAF12, TAF6, HFI1/ADA1, UBP8, GCN5, ADA2, SPT3, SGF29, TAF10, TAF9, SGF11 and SUS1. The SAGA complex is composed of 4 modules, namely the HAT (histone acetyltransferase) module (GCN5, ADA2, NGG1/ADA3 and SGF29), the DUB (deubiquitinating) module (UBP8, SGF11, SGF73 and SUS1), the core or TAF (TBP-associated factor) module (TAF5, TAF6, TAF9, TAF10 and TAF12), and the Tra1 or SPT (Suppressor of Ty) module (TRA1, HFI1/ADA1, SPT3, SPT7, SPT8 and SPT20/ADA5). The Tra1/SPT module binds activators, the core module recruits TBP (TATA-binding protein), the HAT module contains the histone H3 acetyltransferase GCN5, and the DUB module comprises the histone H2B deubiquitinase UBP8. Also identified in an altered form of SAGA, named SALSA (SAGA altered, Spt8 absent) or SLIK (SAGA-like) complex, which contains a C-terminal truncated form of SPT7 and is missing SPT8. However, it has been shown that the SAGA and SAGA-like SALSA/SLIK transcriptional coactivators are structurally and biochemically equivalent. Identified in the Ada.spt complex with NGG1/ADA3 and TRA1. Protease PEP4 directly cleaves the C-terminus of SPT7(SAGA) to form SPT7(SLIK) within the SAGA complex in the nucleus.

It localises to the nucleus. Functionally, component of the transcription coactivator SAGA complex. SAGA acts as a general cofactor required for essentially all RNA polymerase II transcription. At the promoters, SAGA is required for transcription pre-initiation complex (PIC) recruitment. It influences RNA polymerase II transcriptional activity through different activities such as TBP interaction (via core/TAF module) and promoter selectivity, interaction with transcription activators (via Tra1/SPT module), and chromatin modification through histone acetylation (via HAT module) and deubiquitination (via DUB module). SAGA preferentially acetylates histones H3 (to form H3K9ac, H3K14ac, H3K18ac and H3K23ac) and H2B and deubiquitinates histone H2B. SAGA interacts with DNA via upstream activating sequences (UASs). Also identified in a modified version of SAGA named SALSA or SLIK. The cleavage of SPT7 and the absence of the SPT8 subunit in SLIK neither drive any major conformational differences in its structure compared with SAGA, nor significantly affect HAT, DUB, or DNA-binding activities. The polypeptide is SAGA complex subunit SPT7 (SPT7) (Saccharomyces cerevisiae (strain ATCC 204508 / S288c) (Baker's yeast)).